The chain runs to 134 residues: Small ribosomal subunit protein bS6 (134 aa).

The segment covering 113–122 (NRDIKEKEQP) has biased composition (basic and acidic residues). The interval 113–134 (NRDIKEKEQPSESNVDADLKVN) is disordered.

Belongs to the bacterial ribosomal protein bS6 family.

Its function is as follows. Binds together with bS18 to 16S ribosomal RNA. This Borrelia duttonii (strain Ly) protein is Small ribosomal subunit protein bS6.